The chain runs to 575 residues: Septation ring formation regulator EzrA (575 aa).

Topologically, residues 1-8 (MSNGQLIY) are extracellular. Residues 9–27 (LMVAIAVILVLAYVVAIFL) traverse the membrane as a helical segment. The Cytoplasmic segment spans residues 28–575 (RKRNEGRLEA…YEKTRETIRF (548 aa)). Coiled-coil stretches lie at residues 105–191 (LKAS…FVTL), 265–301 (LYEA…LYDI), 354–416 (VRRI…IEKD), and 456–526 (TASN…IQEA).

Belongs to the EzrA family.

The protein resides in the cell membrane. Its function is as follows. Negative regulator of FtsZ ring formation; modulates the frequency and position of FtsZ ring formation. Inhibits FtsZ ring formation at polar sites. Interacts either with FtsZ or with one of its binding partners to promote depolymerization. The chain is Septation ring formation regulator EzrA from Streptococcus pneumoniae serotype 4 (strain ATCC BAA-334 / TIGR4).